We begin with the raw amino-acid sequence, 869 residues long: Ribonucleoside-diphosphate reductase large chain 2 (869 aa).

One can recognise an ATP-cone domain in the interval 1–92 (MYVIKRDGRK…ISNLHKQTTK (92 aa)). ATP is bound by residues 5 to 6 (KR), 11 to 17 (EPVQFDK), Thr53, and Asp57. 2 residues coordinate GDP: Ser202 and Ser217. A disulfide bond links Cys218 and Cys443. DTTP-binding positions include 226–228 (DSI), Lys243, Arg256, and 263–264 (AG). Ser227 carries the post-translational modification Phosphoserine. Lys387 is covalently cross-linked (Glycyl lysine isopeptide (Lys-Gly) (interchain with G-Cter in ubiquitin)). Residue Asn426 coordinates GDP. Asn426 serves as the catalytic Proton acceptor. The Cysteine radical intermediate role is filled by Cys428. GDP is bound by residues Glu430 and 608–611 (TAST). Residue Glu430 is the Proton acceptor of the active site. Residues 793–843 (SALTESSDNEKDASPVPSEQSSVSSAMSNVKLEDSVAPAVPTETIKEDSDE) form a disordered region. Residues Ser806, Ser827, and Ser868 each carry the phosphoserine modification. The segment covering 806 to 820 (SPVPSEQSSVSSAMS) has biased composition (low complexity).

It belongs to the ribonucleoside diphosphate reductase large chain family. Heterotetramer of two large (R1) and two small (R2) subunits. S.cerevisiae has two different R1 subunits (RNR1 and RNR3) and two different R2 subunits (RNR2 and RNR4). The functional form of the small subunits is a RNR2-RNR4 heterodimer, where RNR2 provides the iron-radical center and RNR4 is required for proper folding of RNR2 and assembly with the large subunits. Under normal growth conditions, the active form of the large subunits is a homodimer of the constitutively expressed RNR1. In damaged cells or cells arrested for DNA synthesis, the reductase consists of multiple species because of the association of the small subunits (RNR2-RNR4) with either the RNR1 homodimer or a heterodimer of RNR1 and the damage-inducible RNR3.

It is found in the cytoplasm. The enzyme catalyses a 2'-deoxyribonucleoside 5'-diphosphate + [thioredoxin]-disulfide + H2O = a ribonucleoside 5'-diphosphate + [thioredoxin]-dithiol. Under complex allosteric control mediated by deoxynucleoside triphosphates and ATP binding to separate specificity and activation sites on the large subunit. The type of nucleotide bound at the specificity site determines substrate preference. It seems probable that ATP makes the enzyme reduce CDP and UDP, dGTP favors ADP reduction and dTTP favors GDP reduction. Stimulated by ATP and inhibited by dATP binding to the activity site. Functionally, provides the precursors necessary for DNA synthesis. Catalyzes the biosynthesis of deoxyribonucleotides from the corresponding ribonucleotides. This is Ribonucleoside-diphosphate reductase large chain 2 (RNR3) from Saccharomyces cerevisiae (strain ATCC 204508 / S288c) (Baker's yeast).